Reading from the N-terminus, the 90-residue chain is Small ribosomal subunit protein bS16 (90 aa).

It belongs to the bacterial ribosomal protein bS16 family.

In Clostridioides difficile (strain 630) (Peptoclostridium difficile), this protein is Small ribosomal subunit protein bS16.